A 444-amino-acid chain; its full sequence is CRAL-TRIO domain-containing protein C3H8.02 (444 aa).

At Ser40 the chain carries Phosphoserine. Residue Thr43 is modified to Phosphothreonine. Ser81 carries the phosphoserine modification. The region spanning 171 to 330 (DDDFVRQLRI…EFGGPNPWRY (160 aa)) is the CRAL-TRIO domain. Phosphothreonine is present on Thr418.

This chain is CRAL-TRIO domain-containing protein C3H8.02, found in Schizosaccharomyces pombe (strain 972 / ATCC 24843) (Fission yeast).